The sequence spans 247 residues: Acetate transporter protein patA (247 aa).

Residue Asn20 is glycosylated (N-linked (GlcNAc...) asparagine). 6 consecutive transmembrane segments (helical) span residues 37 to 57 (PPIT…AIAF), 71 to 91 (AITN…LVLV), 106 to 126 (VFGG…PAFG), 141 to 161 (ALGY…IAAM), 169 to 189 (AMLG…FAMA), and 202 to 222 (AAGA…AHLM).

Belongs to the acetate uptake transporter (AceTr) (TC 2.A.96) family.

Its subcellular location is the endoplasmic reticulum membrane. It participates in mycotoxin biosynthesis; patulin biosynthesis. Functionally, acetate transporter protein; part of the gene cluster that mediates the biosynthesis of patulin, an acetate-derived tetraketide mycotoxin produced by several fungal species that shows antimicrobial properties against several bacteria. May be involved in the uptake of acetate, a substrate for the synthesis of 6-methylsalicylic acid by the polyketide synthase patK. In Aspergillus clavatus (strain ATCC 1007 / CBS 513.65 / DSM 816 / NCTC 3887 / NRRL 1 / QM 1276 / 107), this protein is Acetate transporter protein patA.